The following is a 247-amino-acid chain: Orotidine 5'-phosphate decarboxylase (247 aa).

Substrate contacts are provided by residues aspartate 22, lysine 44, 71 to 80 (DLKFHDIPNT), threonine 131, arginine 192, glutamine 201, glycine 221, and arginine 222. Lysine 73 functions as the Proton donor in the catalytic mechanism.

Belongs to the OMP decarboxylase family. Type 1 subfamily. As to quaternary structure, homodimer.

It catalyses the reaction orotidine 5'-phosphate + H(+) = UMP + CO2. It participates in pyrimidine metabolism; UMP biosynthesis via de novo pathway; UMP from orotate: step 2/2. Functionally, catalyzes the decarboxylation of orotidine 5'-monophosphate (OMP) to uridine 5'-monophosphate (UMP). The sequence is that of Orotidine 5'-phosphate decarboxylase from Pectobacterium atrosepticum (strain SCRI 1043 / ATCC BAA-672) (Erwinia carotovora subsp. atroseptica).